Consider the following 105-residue polypeptide: uncharacterized protein (105 aa).

A compositionally biased stretch (low complexity) spans 31-47 (SVNLPSPSVKPSVTPSV). The segment at 31–80 (SVNLPSPSVKPSVTPSVKKPPHVIRSDYSKPREKPAKVAKKPTVKNDKKP) is disordered. Residues 54-66 (IRSDYSKPREKPA) are compositionally biased toward basic and acidic residues.

This is an uncharacterized protein from Caenorhabditis elegans.